The primary structure comprises 620 residues: Chaperone protein HscA homolog (620 aa).

It belongs to the heat shock protein 70 family.

In terms of biological role, chaperone involved in the maturation of iron-sulfur cluster-containing proteins. Has a low intrinsic ATPase activity which is markedly stimulated by HscB. This chain is Chaperone protein HscA homolog, found in Pseudomonas syringae pv. syringae (strain B728a).